Consider the following 41-residue polypeptide: Histone H3.2 (41 aa).

The tract at residues 1-41 (MARAKQTARKSTGAEAPRKQLASKAARKSAPATGGIKKPHR) is disordered.

The protein belongs to the histone H3 family. In terms of assembly, the nucleosome is a histone octamer containing two molecules each of H2A, H2B, H3 and H4 assembled in one H3-H4 heterotetramer and two H2A-H2B heterodimers. The octamer wraps approximately 147 bp of DNA.

It localises to the nucleus. It is found in the chromosome. Functionally, core component of nucleosome. Nucleosomes wrap and compact DNA into chromatin, limiting DNA accessibility to the cellular machineries which require DNA as a template. Histones thereby play a central role in transcription regulation, DNA repair, DNA replication and chromosomal stability. DNA accessibility is regulated via a complex set of post-translational modifications of histones, also called histone code, and nucleosome remodeling. In Tetrahymena borealis, this protein is Histone H3.2.